The primary structure comprises 361 residues: Tyrosine--tRNA ligase (361 aa).

The L-tyrosine site is built by tyrosine 36, tyrosine 162, glutamine 166, aspartate 169, and glutamine 184. The short motif at lysine 235–serine 239 is the 'KMSKS' region element. Position 238 (lysine 238) interacts with ATP.

The protein belongs to the class-I aminoacyl-tRNA synthetase family. TyrS type 4 subfamily. As to quaternary structure, homodimer.

It is found in the cytoplasm. The enzyme catalyses tRNA(Tyr) + L-tyrosine + ATP = L-tyrosyl-tRNA(Tyr) + AMP + diphosphate + H(+). Its function is as follows. Catalyzes the attachment of tyrosine to tRNA(Tyr) in a two-step reaction: tyrosine is first activated by ATP to form Tyr-AMP and then transferred to the acceptor end of tRNA(Tyr). The chain is Tyrosine--tRNA ligase from Sulfolobus acidocaldarius (strain ATCC 33909 / DSM 639 / JCM 8929 / NBRC 15157 / NCIMB 11770).